Reading from the N-terminus, the 374-residue chain is dTDP-3-amino-3,4,6-trideoxy-alpha-D-glucose transaminase (374 aa).

Pyridoxal 5'-phosphate-binding positions include Gly60, Gln160, 181–186, Tyr214, Tyr221, 229–231, and Tyr316; these read SFYPTK and NSR. An N6-(pyridoxal phosphate)lysine modification is found at Lys186.

It belongs to the degT/dnrJ/eryC1 family. Pyridoxal 5'-phosphate is required as a cofactor.

It catalyses the reaction dTDP-3-amino-3,4,6-trideoxy-alpha-D-glucose + 2-oxoglutarate = dTDP-3-dehydro-4,6-dideoxy-alpha-D-glucose + L-glutamate. It participates in antibiotic biosynthesis. Involved in the biosynthesis of the amino sugar dTDP-L-megosamine which is found in the macrolide antibiotic and antiparasitic megalomicin A. Catalyzes the reversible transfer of the amino group from L-glutamate to the C-3 position of dTDP-3-keto-4,6-deoxyglucose to yield dTDP-3-amino-3,4,6-trideoxyglucose. This is dTDP-3-amino-3,4,6-trideoxy-alpha-D-glucose transaminase from Micromonospora megalomicea subsp. nigra.